The following is a 302-amino-acid chain: 1D-myo-inositol 2-acetamido-2-deoxy-alpha-D-glucopyranoside deacetylase (302 aa).

Positions 13, 16, and 155 each coordinate Zn(2+).

Belongs to the MshB deacetylase family. Zn(2+) serves as cofactor.

It carries out the reaction 1D-myo-inositol 2-acetamido-2-deoxy-alpha-D-glucopyranoside + H2O = 1D-myo-inositol 2-amino-2-deoxy-alpha-D-glucopyranoside + acetate. Functionally, catalyzes the deacetylation of 1D-myo-inositol 2-acetamido-2-deoxy-alpha-D-glucopyranoside (GlcNAc-Ins) in the mycothiol biosynthesis pathway. The sequence is that of 1D-myo-inositol 2-acetamido-2-deoxy-alpha-D-glucopyranoside deacetylase from Nocardioides sp. (strain ATCC BAA-499 / JS614).